A 207-amino-acid chain; its full sequence is Large ribosomal subunit protein uL4 (207 aa).

The disordered stretch occupies residues 49–78 (HAVKNRSAVRGGGRKPWRQKGTGRARQGSI). Residues 60–71 (GGRKPWRQKGTG) are compositionally biased toward basic residues.

It belongs to the universal ribosomal protein uL4 family. In terms of assembly, part of the 50S ribosomal subunit.

Functionally, one of the primary rRNA binding proteins, this protein initially binds near the 5'-end of the 23S rRNA. It is important during the early stages of 50S assembly. It makes multiple contacts with different domains of the 23S rRNA in the assembled 50S subunit and ribosome. In terms of biological role, forms part of the polypeptide exit tunnel. The chain is Large ribosomal subunit protein uL4 from Latilactobacillus sakei subsp. sakei (strain 23K) (Lactobacillus sakei subsp. sakei).